A 274-amino-acid chain; its full sequence is Transmembrane O-methyltransferase (274 aa).

The helical transmembrane segment at 14-34 (VGTMSPAIALAFLPLVVTLLV) threads the bilayer. S-adenosyl-L-methionine is bound by residues Glu120, 122–123 (GT), Ser128, Glu146, and Ser176.

Belongs to the class I-like SAM-binding methyltransferase superfamily. Cation-dependent O-methyltransferase family. Interacts with LHFPL5, PCDH15, TMC1, TMC2 and TMIE. Interacts directly with TMC1. The interaction of TOMT with TMC1 and TMC2 is required for the transportation of TMC1/2 into the stereocilia of hair cells.

It is found in the membrane. The protein localises to the cytoplasm. The protein resides in the endoplasmic reticulum. It carries out the reaction a catechol + S-adenosyl-L-methionine = a guaiacol + S-adenosyl-L-homocysteine + H(+). Functionally, catalyzes the O-methylation, and thereby the inactivation, of catecholamine neurotransmitters and catechol hormones. Required for auditory function. Component of the cochlear hair cell's mechanotransduction (MET) machinery. Involved in the assembly of the asymmetric tip-link MET complex. Required for transportation of TMC1 and TMC2 proteins into the mechanically sensitive stereocilia of the hair cells. The function in MET is independent of the enzymatic activity. The sequence is that of Transmembrane O-methyltransferase from Propithecus coquereli (Coquerel's sifaka).